We begin with the raw amino-acid sequence, 905 residues long: Core protein VP3 (905 aa).

Belongs to the orbivirus VP3 family.

Its subcellular location is the virion. In terms of biological role, the VP3 protein is one of the five proteins (with VP1, VP4, VP6 and VP7) which form the inner capsid of the virus. This African horse sickness virus 6 (AHSV-6) protein is Core protein VP3 (Segment-3).